We begin with the raw amino-acid sequence, 121 residues long: Protein TusC (121 aa).

It belongs to the DsrF/TusC family. As to quaternary structure, heterohexamer, formed by a dimer of trimers. The hexameric TusBCD complex contains 2 copies each of TusB, TusC and TusD. The TusBCD complex interacts with TusE.

The protein localises to the cytoplasm. Part of a sulfur-relay system required for 2-thiolation of 5-methylaminomethyl-2-thiouridine (mnm(5)s(2)U) at tRNA wobble positions. This is Protein TusC from Yersinia pestis bv. Antiqua (strain Antiqua).